Here is a 704-residue protein sequence, read N- to C-terminus: Histone-lysine N-methyltransferase, H3 lysine-9 specific SUVH1 (704 aa).

2 disordered regions span residues 1 to 21 and 68 to 176; these read MEQG…TRVL and PFVA…QAEG. Polar residues-rich tracts occupy residues 80 to 90 and 109 to 121; these read ESSQQTPSGVP and SFRT…GNSG. The segment covering 159–170 has biased composition (basic residues); it reads GKKRGRPKKPRR. The YDG domain occupies 265–412; that stretch reads GNAPGIEVGD…CNVFKYKLLR (148 aa). The Pre-SET domain maps to 487–548; the sequence is PSCHCVGGCQ…NCRNRMSQGG (62 aa). Residues Cys-489, Cys-491, Cys-495, Cys-502, Cys-504, Cys-530, Cys-534, Cys-536, and Cys-540 each contribute to the Zn(2+) site. The 131-residue stretch at 551-681 folds into the SET domain; sequence ARLEVFKTKN…PMQELTFDYG (131 aa). S-adenosyl-L-methionine contacts are provided by residues 561–563, Asp-593, Tyr-595, Arg-635, and 638–639; these read RGW and NH. Residues Cys-641, Cys-692, Cys-694, and Cys-699 each coordinate Zn(2+). One can recognise a Post-SET domain in the interval 688-704; that stretch reads RRKKCLCGSLNCRGYFY.

Belongs to the class V-like SAM-binding methyltransferase superfamily. Histone-lysine methyltransferase family. Suvar3-9 subfamily. Interacts with LHP1. In terms of tissue distribution, expressed in roots, stems, leaves and flowers.

The protein localises to the nucleus. Its subcellular location is the chromosome. The enzyme catalyses N(6)-methyl-L-lysyl(27)-[histone H3] + S-adenosyl-L-methionine = N(6),N(6)-dimethyl-L-lysyl(27)-[histone H3] + S-adenosyl-L-homocysteine + H(+). The catalysed reaction is L-lysyl(9)-[histone H3] + 2 S-adenosyl-L-methionine = N(6),N(6)-dimethyl-L-lysyl(9)-[histone H3] + 2 S-adenosyl-L-homocysteine + 2 H(+). It carries out the reaction L-lysyl(27)-[histone H3] + S-adenosyl-L-methionine = N(6)-methyl-L-lysyl(27)-[histone H3] + S-adenosyl-L-homocysteine + H(+). In terms of biological role, histone methyltransferase. Methylates in vitro both 'Lys-9' and 'Lys-27' of histone H3. Required for in vivo dimethylation of 'Lys-9'. H3 'Lys-9' methylation represents a specific tag for epigenetic control for plant development and transcriptional repression. The sequence is that of Histone-lysine N-methyltransferase, H3 lysine-9 specific SUVH1 (SUVH1) from Nicotiana tabacum (Common tobacco).